The chain runs to 317 residues: Lipoyl synthase (317 aa).

Residues 1–22 (MVTVVNTLNRPRHPEKQNRPET) form a disordered region. Residues 12 to 22 (RHPEKQNRPET) show a composition bias toward basic and acidic residues. The [4Fe-4S] cluster site is built by C57, C62, C68, C83, C87, C90, and S296. Residues 69–285 (WEKKHATFMI…ETVAYAKGFL (217 aa)) enclose the Radical SAM core domain.

This sequence belongs to the radical SAM superfamily. Lipoyl synthase family. It depends on [4Fe-4S] cluster as a cofactor.

It is found in the cytoplasm. It catalyses the reaction [[Fe-S] cluster scaffold protein carrying a second [4Fe-4S](2+) cluster] + N(6)-octanoyl-L-lysyl-[protein] + 2 oxidized [2Fe-2S]-[ferredoxin] + 2 S-adenosyl-L-methionine + 4 H(+) = [[Fe-S] cluster scaffold protein] + N(6)-[(R)-dihydrolipoyl]-L-lysyl-[protein] + 4 Fe(3+) + 2 hydrogen sulfide + 2 5'-deoxyadenosine + 2 L-methionine + 2 reduced [2Fe-2S]-[ferredoxin]. The protein operates within protein modification; protein lipoylation via endogenous pathway; protein N(6)-(lipoyl)lysine from octanoyl-[acyl-carrier-protein]: step 2/2. Functionally, catalyzes the radical-mediated insertion of two sulfur atoms into the C-6 and C-8 positions of the octanoyl moiety bound to the lipoyl domains of lipoate-dependent enzymes, thereby converting the octanoylated domains into lipoylated derivatives. The sequence is that of Lipoyl synthase from Azorhizobium caulinodans (strain ATCC 43989 / DSM 5975 / JCM 20966 / LMG 6465 / NBRC 14845 / NCIMB 13405 / ORS 571).